Here is a 62-residue protein sequence, read N- to C-terminus: U10-hottentoxin-Hj3a (62 aa).

The signal sequence occupies residues 1-22 (MQKLLIILILFCILKFNVDVEG). Disulfide bonds link Cys28–Cys46, Cys33–Cys59, and Cys37–Cys61.

The protein belongs to the short scorpion toxin superfamily. Potassium channel inhibitor family. Alpha-KTx 23 subfamily. As to expression, expressed by the venom gland.

Its subcellular location is the secreted. Functionally, may block potassium channels. In Hottentotta judaicus (Black scorpion), this protein is U10-hottentoxin-Hj3a.